Consider the following 304-residue polypeptide: Ribosomal RNA small subunit methyltransferase H (304 aa).

Residues 36 to 38 (CGH), Asp55, Phe81, Asp102, and Gln109 each bind S-adenosyl-L-methionine.

This sequence belongs to the methyltransferase superfamily. RsmH family.

It localises to the cytoplasm. It carries out the reaction cytidine(1402) in 16S rRNA + S-adenosyl-L-methionine = N(4)-methylcytidine(1402) in 16S rRNA + S-adenosyl-L-homocysteine + H(+). Its function is as follows. Specifically methylates the N4 position of cytidine in position 1402 (C1402) of 16S rRNA. The protein is Ribosomal RNA small subunit methyltransferase H of Onion yellows phytoplasma (strain OY-M).